Here is a 209-residue protein sequence, read N- to C-terminus: Cytidylate kinase (209 aa).

ATP is bound at residue 9 to 17; it reads GPAAAGKGT.

The protein belongs to the cytidylate kinase family. Type 1 subfamily.

The protein localises to the cytoplasm. The enzyme catalyses CMP + ATP = CDP + ADP. It catalyses the reaction dCMP + ATP = dCDP + ADP. The polypeptide is Cytidylate kinase (Granulibacter bethesdensis (strain ATCC BAA-1260 / CGDNIH1)).